We begin with the raw amino-acid sequence, 148 residues long: Large ribosomal subunit protein uL13 (148 aa).

The protein belongs to the universal ribosomal protein uL13 family. Part of the 50S ribosomal subunit.

Its function is as follows. This protein is one of the early assembly proteins of the 50S ribosomal subunit, although it is not seen to bind rRNA by itself. It is important during the early stages of 50S assembly. In Sulfolobus acidocaldarius (strain ATCC 33909 / DSM 639 / JCM 8929 / NBRC 15157 / NCIMB 11770), this protein is Large ribosomal subunit protein uL13.